Reading from the N-terminus, the 476-residue chain is Glycogen synthase (476 aa).

K15 contacts ADP-alpha-D-glucose.

It belongs to the glycosyltransferase 1 family. Bacterial/plant glycogen synthase subfamily.

The catalysed reaction is [(1-&gt;4)-alpha-D-glucosyl](n) + ADP-alpha-D-glucose = [(1-&gt;4)-alpha-D-glucosyl](n+1) + ADP + H(+). Its pathway is glycan biosynthesis; glycogen biosynthesis. Functionally, synthesizes alpha-1,4-glucan chains using ADP-glucose. The chain is Glycogen synthase from Streptococcus agalactiae serotype III (strain NEM316).